Consider the following 466-residue polypeptide: Uronate isomerase (466 aa).

The protein belongs to the metallo-dependent hydrolases superfamily. Uronate isomerase family.

The enzyme catalyses D-glucuronate = D-fructuronate. The catalysed reaction is aldehydo-D-galacturonate = keto-D-tagaturonate. It participates in carbohydrate metabolism; pentose and glucuronate interconversion. This chain is Uronate isomerase, found in Brucella canis (strain ATCC 23365 / NCTC 10854 / RM-666).